We begin with the raw amino-acid sequence, 149 residues long: Large ribosomal subunit protein bL9 (149 aa).

Belongs to the bacterial ribosomal protein bL9 family.

In terms of biological role, binds to the 23S rRNA. The polypeptide is Large ribosomal subunit protein bL9 (Vibrio vulnificus (strain CMCP6)).